The sequence spans 140 residues: Nucleoside diphosphate kinase (140 aa).

K11, F59, R87, T93, R104, and N114 together coordinate ATP. The Pros-phosphohistidine intermediate role is filled by H117.

The protein belongs to the NDK family. In terms of assembly, homotetramer. Requires Mg(2+) as cofactor.

The protein localises to the cytoplasm. The enzyme catalyses a 2'-deoxyribonucleoside 5'-diphosphate + ATP = a 2'-deoxyribonucleoside 5'-triphosphate + ADP. It carries out the reaction a ribonucleoside 5'-diphosphate + ATP = a ribonucleoside 5'-triphosphate + ADP. Its function is as follows. Major role in the synthesis of nucleoside triphosphates other than ATP. The ATP gamma phosphate is transferred to the NDP beta phosphate via a ping-pong mechanism, using a phosphorylated active-site intermediate. The protein is Nucleoside diphosphate kinase of Rhizobium johnstonii (strain DSM 114642 / LMG 32736 / 3841) (Rhizobium leguminosarum bv. viciae).